Here is a 353-residue protein sequence, read N- to C-terminus: MDPGPAGDEVSLAPQQETAEQDVETTLRPRRLSEFVGQARVREQLELVLHGALNRGDQPDHVLFSGPPGLGKTSLAMIIAAELGASIRVTSGPALERPGDLAAMLSNLAEGDVLFIDEIHRIARPAEEMLYLAMEDYRVDIVVGKGPGATSIPLEIAPFTLVGATTRSGALTGPLRDRFGFTAHMEFYEPAELELVVRRSAGILGVDLRDEGAVEIARRSRGTPRIANRLLRRVRDFAEVRADGAVTLDVARAALEVYDVDEHGLDRLDRAVLGALVRSFNGGPVGVSTLAVAVGEEPTTVEEVCEPYLVRAGMLARTPRGRVATVAAWQHLGLVPPQHAPGEATRSLFADEV.

Residues 1–25 form a disordered region; that stretch reads MDPGPAGDEVSLAPQQETAEQDVET. The large ATPase domain (RuvB-L) stretch occupies residues 1-188; sequence MDPGPAGDEV…FGFTAHMEFY (188 aa). ATP is bound by residues L27, R28, G69, K72, T73, S74, 135–137, R178, Y188, and R225; that span reads EDY. Residue T73 participates in Mg(2+) binding. The tract at residues 189 to 259 is small ATPAse domain (RuvB-S); sequence EPAELELVVR…VARAALEVYD (71 aa). Residues 262–353 form a head domain (RuvB-H) region; that stretch reads EHGLDRLDRA…ATRSLFADEV (92 aa). R317 and R322 together coordinate DNA.

The protein belongs to the RuvB family. In terms of assembly, homohexamer. Forms an RuvA(8)-RuvB(12)-Holliday junction (HJ) complex. HJ DNA is sandwiched between 2 RuvA tetramers; dsDNA enters through RuvA and exits via RuvB. An RuvB hexamer assembles on each DNA strand where it exits the tetramer. Each RuvB hexamer is contacted by two RuvA subunits (via domain III) on 2 adjacent RuvB subunits; this complex drives branch migration. In the full resolvosome a probable DNA-RuvA(4)-RuvB(12)-RuvC(2) complex forms which resolves the HJ.

It is found in the cytoplasm. It catalyses the reaction ATP + H2O = ADP + phosphate + H(+). Functionally, the RuvA-RuvB-RuvC complex processes Holliday junction (HJ) DNA during genetic recombination and DNA repair, while the RuvA-RuvB complex plays an important role in the rescue of blocked DNA replication forks via replication fork reversal (RFR). RuvA specifically binds to HJ cruciform DNA, conferring on it an open structure. The RuvB hexamer acts as an ATP-dependent pump, pulling dsDNA into and through the RuvAB complex. RuvB forms 2 homohexamers on either side of HJ DNA bound by 1 or 2 RuvA tetramers; 4 subunits per hexamer contact DNA at a time. Coordinated motions by a converter formed by DNA-disengaged RuvB subunits stimulates ATP hydrolysis and nucleotide exchange. Immobilization of the converter enables RuvB to convert the ATP-contained energy into a lever motion, pulling 2 nucleotides of DNA out of the RuvA tetramer per ATP hydrolyzed, thus driving DNA branch migration. The RuvB motors rotate together with the DNA substrate, which together with the progressing nucleotide cycle form the mechanistic basis for DNA recombination by continuous HJ branch migration. Branch migration allows RuvC to scan DNA until it finds its consensus sequence, where it cleaves and resolves cruciform DNA. This chain is Holliday junction branch migration complex subunit RuvB, found in Saccharopolyspora erythraea (strain ATCC 11635 / DSM 40517 / JCM 4748 / NBRC 13426 / NCIMB 8594 / NRRL 2338).